A 326-amino-acid chain; its full sequence is Virulence-associated V antigen (326 aa).

It is found in the secreted. In terms of biological role, involved in calcium regulation of yop expression, which includes the export process. The polypeptide is Virulence-associated V antigen (lcrV) (Yersinia pseudotuberculosis serotype I (strain IP32953)).